Consider the following 302-residue polypeptide: N-acetylmuramic acid 6-phosphate etherase (302 aa).

One can recognise an SIS domain in the interval 58–221 (IGESFLNGGR…STGAMVKTGK (164 aa)). Glutamate 86 (proton donor) is an active-site residue. Residue glutamate 117 is part of the active site.

Belongs to the GCKR-like family. MurNAc-6-P etherase subfamily. Homodimer.

It catalyses the reaction N-acetyl-D-muramate 6-phosphate + H2O = N-acetyl-D-glucosamine 6-phosphate + (R)-lactate. The protein operates within amino-sugar metabolism; N-acetylmuramate degradation. Specifically catalyzes the cleavage of the D-lactyl ether substituent of MurNAc 6-phosphate, producing GlcNAc 6-phosphate and D-lactate. This Clostridium botulinum (strain Langeland / NCTC 10281 / Type F) protein is N-acetylmuramic acid 6-phosphate etherase.